The chain runs to 189 residues: Potassium-transporting ATPase KdpC subunit (189 aa).

A helical transmembrane segment spans residues 6–26; the sequence is PAILLFIMFTIICGGIYPALV.

Belongs to the KdpC family. In terms of assembly, the system is composed of three essential subunits: KdpA, KdpB and KdpC.

The protein resides in the cell inner membrane. In terms of biological role, part of the high-affinity ATP-driven potassium transport (or Kdp) system, which catalyzes the hydrolysis of ATP coupled with the electrogenic transport of potassium into the cytoplasm. This subunit acts as a catalytic chaperone that increases the ATP-binding affinity of the ATP-hydrolyzing subunit KdpB by the formation of a transient KdpB/KdpC/ATP ternary complex. The protein is Potassium-transporting ATPase KdpC subunit of Trichlorobacter lovleyi (strain ATCC BAA-1151 / DSM 17278 / SZ) (Geobacter lovleyi).